The following is a 217-amino-acid chain: Outer-membrane lipoprotein LolB (217 aa).

Positions 1 to 20 (MSKTVRTLALGGLVLAGLSA) are cleaved as a signal peptide. A lipid anchor (N-palmitoyl cysteine) is attached at Cys21. A lipid anchor (S-diacylglycerol cysteine) is attached at Cys21. The segment at 105-124 (DTTSGAGRLEGLEGGPRSGP) is disordered.

Belongs to the LolB family. Monomer.

It is found in the cell outer membrane. Functionally, plays a critical role in the incorporation of lipoproteins in the outer membrane after they are released by the LolA protein. The protein is Outer-membrane lipoprotein LolB of Xanthomonas axonopodis pv. citri (strain 306).